A 434-amino-acid polypeptide reads, in one-letter code: Nuclear receptor subfamily 1 group I member 2 (434 aa).

Residues 38-107 (PQICRVCGDK…RLRKCLESGM (70 aa)) constitute a DNA-binding region (nuclear receptor). NR C4-type zinc fingers lie at residues 41–61 (CRVCGDKATGYHFNVMTCEGC) and 77–102 (CPFRKGACEITRKTRRQCQACRLRKC). The Bipartite nuclear localization signal motif lies at 66-92 (RRAMKRNARLRCPFRKGACEITRKTRR). The interval 108–145 (KKEMIMSDAAVEERRALIKRKKRERIGTQPPGVQGLTE) is hinge. Positions 146–433 (EQRMMIRELM…LMQELFGITG (288 aa)) constitute an NR LBD domain. Hyperforin is bound by residues serine 247, 285 to 288 (QLRF), and histidine 407.

It belongs to the nuclear hormone receptor family. NR1 subfamily. In terms of assembly, heterodimer with RXRA. Interacts with NCOA1. Interacts (via domain NR LBD) with CRY1 and CRY2 in a ligand-dependent manner.

It localises to the nucleus. Nuclear receptor that binds and is activated by a variety of endogenous and xenobiotic compounds. Transcription factor that activates the transcription of multiple genes involved in the metabolism and secretion of potentially harmful xenobiotics, endogenous compounds and drugs. Response to specific ligands is species-specific, due to differences in the ligand-binding domain. Activated by naturally occurring steroids, such as pregnenolone and progesterone. Binds to a response element in the promoters of the CYP3A4 and ABCB1/MDR1 genes. This chain is Nuclear receptor subfamily 1 group I member 2 (NR1I2), found in Macaca mulatta (Rhesus macaque).